A 437-amino-acid polypeptide reads, in one-letter code: CMP-5'-(3-aminopropyl)phosphonate hydroxylase (437 aa).

The cofactor is FAD.

It carries out the reaction CMP-5'-(3-aminopropyl)phosphonate + NADPH + O2 = CMP-5'-(N-hydroxy-3-aminopropyl)phosphonate + NADP(+) + H2O. It participates in antibiotic biosynthesis. Functionally, hydroxylase involved in the biosynthesis of the phosphonate antibiotic FR-900098, a potent antimalarial agent that acts as an inhibitor of 1-deoxy-D-xylulose 5-phosphate reductoisomerase (DXR), the first enzyme in the nonmevalonate pathway for isoprenoid biosynthesis. Catalyzes the N-hydroxylation of CMP-5'-3-aminopropylphosphonate (CMP-5'-3APn) to CMP-5'-(N-hydroxy-3-aminopropyl)phosphonate (CMP-5'-H3APn). Cannot use CMP-5'-N-acetyl-3-aminopropylphosphonate (CMP-5'-Ac3APn) as a substrate. The chain is CMP-5'-(3-aminopropyl)phosphonate hydroxylase from Streptomyces rubellomurinus (strain ATCC 31215).